Here is a 437-residue protein sequence, read N- to C-terminus: tRNA-2-methylthio-N(6)-dimethylallyladenosine synthase (437 aa).

The MTTase N-terminal domain occupies 1–115 (MKVYIETMGC…ISQVIHKEKA (115 aa)). [4Fe-4S] cluster-binding residues include cysteine 10, cysteine 46, cysteine 78, cysteine 148, cysteine 152, and cysteine 155. The Radical SAM core domain maps to 134–367 (KKAQIRSLLN…QNRHKEILEE (234 aa)). The TRAM domain occupies 370 to 436 (KLEVGKTHVV…KGRLMAATKG (67 aa)).

It belongs to the methylthiotransferase family. MiaB subfamily. In terms of assembly, monomer. It depends on [4Fe-4S] cluster as a cofactor.

The protein localises to the cytoplasm. It catalyses the reaction N(6)-dimethylallyladenosine(37) in tRNA + (sulfur carrier)-SH + AH2 + 2 S-adenosyl-L-methionine = 2-methylsulfanyl-N(6)-dimethylallyladenosine(37) in tRNA + (sulfur carrier)-H + 5'-deoxyadenosine + L-methionine + A + S-adenosyl-L-homocysteine + 2 H(+). Functionally, catalyzes the methylthiolation of N6-(dimethylallyl)adenosine (i(6)A), leading to the formation of 2-methylthio-N6-(dimethylallyl)adenosine (ms(2)i(6)A) at position 37 in tRNAs that read codons beginning with uridine. The protein is tRNA-2-methylthio-N(6)-dimethylallyladenosine synthase of Helicobacter pylori (strain ATCC 700392 / 26695) (Campylobacter pylori).